The following is a 502-amino-acid chain: Cytochrome P450 71B10 (502 aa).

A helical transmembrane segment spans residues Met1–Lys21. A heme-binding site is contributed by Cys443.

The protein belongs to the cytochrome P450 family. Heme serves as cofactor.

The protein resides in the membrane. The protein is Cytochrome P450 71B10 (CYP71B10) of Arabidopsis thaliana (Mouse-ear cress).